Consider the following 692-residue polypeptide: Proprotein convertase subtilisin/kexin type 9 (692 aa).

The signal sequence occupies residues 1–30; it reads MGTVSSRRSWWPLPLLLLLLLLLGPAGARA. A propeptide spanning residues 31-152 is cleaved from the precursor; that stretch reads QEDEDGDYEE…IEEDSSVFAQ (122 aa). Tyrosine 38 is modified (sulfotyrosine). Position 47 is a phosphoserine (serine 47). One can recognise an Inhibitor I9 domain in the interval 77-149; the sequence is TYVVVLKEET…VDYIEEDSSV (73 aa). The Peptidase S8 domain occupies 155–461; that stretch reads PWNLERITPP…GWQLFCRTVW (307 aa). Active-site charge relay system residues include aspartate 186 and histidine 226. Disulfide bonds link cysteine 223–cysteine 255 and cysteine 323–cysteine 358. Serine 386 (charge relay system) is an active-site residue. Positions 450–692 are C-terminal domain; that stretch reads GAGWQLFCRT…HLAQASQELQ (243 aa). 3 cysteine pairs are disulfide-bonded: cysteine 457-cysteine 527, cysteine 477-cysteine 526, and cysteine 486-cysteine 509. The N-linked (GlcNAc...) asparagine glycan is linked to asparagine 533. Intrachain disulfides connect cysteine 534-cysteine 601, cysteine 552-cysteine 600, cysteine 562-cysteine 588, cysteine 608-cysteine 679, cysteine 626-cysteine 678, and cysteine 635-cysteine 654. At serine 688 the chain carries Phosphoserine.

Belongs to the peptidase S8 family. As to quaternary structure, monomer. Can self-associate to form dimers and higher multimers which may have increased LDLR degrading activity. The precursor protein but not the mature protein may form multimers. Interacts with APOB, VLDLR, LRP8/APOER2 and BACE1. The full-length immature form (pro-PCSK9) interacts with SCNN1A, SCNN1B and SCNN1G. The pro-PCSK9 form (via C-terminal domain) interacts with LDLR. Interacts (via the C-terminal domain) with ANXA2 (via repeat Annexin 1); the interaction inhibits the degradation of LDLR. Ca(2+) serves as cofactor. Cleavage by furin and PCSK5 generates a truncated inactive protein that is unable to induce LDLR degradation. In terms of processing, undergoes autocatalytic cleavage in the endoplasmic reticulum to release the propeptide from the N-terminus and the cleavage of the propeptide is strictly required for its maturation and activation. The cleaved propeptide however remains associated with the catalytic domain through non-covalent interactions, preventing potential substrates from accessing its active site. As a result, it is secreted from cells as a propeptide-containing, enzymatically inactive protein. Post-translationally, phosphorylation protects the propeptide against proteolysis.

The protein resides in the cytoplasm. The protein localises to the secreted. It is found in the endosome. Its subcellular location is the lysosome. It localises to the cell surface. The protein resides in the endoplasmic reticulum. The protein localises to the golgi apparatus. With respect to regulation, its proteolytic activity is autoinhibited by the non-covalent binding of the propeptide to the catalytic domain. Inhibited by EGTA. Crucial player in the regulation of plasma cholesterol homeostasis. Binds to low-density lipid receptor family members: low density lipoprotein receptor (LDLR), very low density lipoprotein receptor (VLDLR), apolipoprotein E receptor (LRP1/APOER) and apolipoprotein receptor 2 (LRP8/APOER2), and promotes their degradation in intracellular acidic compartments. Acts via a non-proteolytic mechanism to enhance the degradation of the hepatic LDLR through a clathrin LDLRAP1/ARH-mediated pathway. May prevent the recycling of LDLR from endosomes to the cell surface or direct it to lysosomes for degradation. Can induce ubiquitination of LDLR leading to its subsequent degradation. Inhibits intracellular degradation of APOB via the autophagosome/lysosome pathway in a LDLR-independent manner. Involved in the disposal of non-acetylated intermediates of BACE1 in the early secretory pathway. Inhibits epithelial Na(+) channel (ENaC)-mediated Na(+) absorption by reducing ENaC surface expression primarily by increasing its proteasomal degradation. Regulates neuronal apoptosis via modulation of LRP8/APOER2 levels and related anti-apoptotic signaling pathways. The sequence is that of Proprotein convertase subtilisin/kexin type 9 (PCSK9) from Pan paniscus (Pygmy chimpanzee).